A 351-amino-acid chain; its full sequence is MLGSVKMEAHDLAEWSYYPEAGEVYSPVTPVPTMAPLNSYMTLNPLSSPYPPGGLPASPLPTGPLAPPAPTAPLGPTFPGLGASTGGGSSSGYGGPGPGLVHGKEMPKGYRRPLAHAKPPYSYISLITMAIQQAPGKMLTLSEIYQWIMDLFPYYRENQQRWQNSIRHSLSFNDCFVKVARSPDKPGKGSYWALHPSSGNMFENGCYLRRQKRFKLEEKVKKGGGGSSASRNSAGSASTATAPAATVASTPQPQPPPPEPEAQGGDEVGALDCGSPAAPSTPYFTGLELPGELKLDAPYNFNHPFSINNLMSEQSPAPPKLDVGFGGYGAEGGEPGVYYQGLYSRSLLNAS.

A compositionally biased stretch (pro residues) spans 52–73 (PGGLPASPLPTGPLAPPAPTAP). The segment at 52–94 (PGGLPASPLPTGPLAPPAPTAPLGPTFPGLGASTGGGSSSGYG) is disordered. Residues 83–94 (ASTGGGSSSGYG) show a composition bias toward gly residues. The fork-head DNA-binding region spans 118-212 (KPPYSYISLI…ENGCYLRRQK (95 aa)). Positions 218–275 (EKVKKGGGGSSASRNSAGSASTATAPAATVASTPQPQPPPPEPEAQGGDEVGALDCGS) are disordered. The span at 228–251 (SASRNSAGSASTATAPAATVASTP) shows a compositional bias: low complexity.

Its subcellular location is the nucleus. Functionally, transcription activator for a number of liver genes such as AFP, albumin, tyrosine aminotransferase, PEPCK, etc. Interacts with the cis-acting regulatory regions of these genes. This Bos taurus (Bovine) protein is Hepatocyte nuclear factor 3-gamma (FOXA3).